Consider the following 368-residue polypeptide: Apolipoprotein A-V (368 aa).

The first 20 residues, Met1–Ala20, serve as a signal peptide directing secretion. Residue Ser52 is modified to Phosphoserine. A coiled-coil region spans residues Thr231 to Phe255. The tract at residues Glu305 to Ala333 is disordered.

Belongs to the apolipoprotein A1/A4/E family. As to quaternary structure, interacts with GPIHBP1. Interacts with SORL1; this interaction leads to APOA5 internalization and sorting either to lysosomes and degradation, or to the trans-Golgi network. Post-translationally, phosphorylated by FAM20C in the extracellular medium. In terms of tissue distribution, liver.

It is found in the secreted. The protein resides in the early endosome. Its subcellular location is the late endosome. The protein localises to the golgi apparatus. It localises to the trans-Golgi network. In terms of biological role, minor apolipoprotein mainly associated with HDL and to a lesser extent with VLDL. May also be associated with chylomicrons. Important determinant of plasma triglyceride (TG) levels by both being a potent stimulator of apo-CII lipoprotein lipase (LPL) TG hydrolysis and an inhibitor of the hepatic VLDL-TG production rate (without affecting the VLDL-apoB production rate). Activates poorly lecithin:cholesterol acyltransferase (LCAT) and does not enhance efflux of cholesterol from macrophages. Binds heparin. The sequence is that of Apolipoprotein A-V (Apoa5) from Mus musculus (Mouse).